Here is an 84-residue protein sequence, read N- to C-terminus: Translational regulator CsrA (84 aa).

The protein belongs to the CsrA/RsmA family. In terms of assembly, homodimer; the beta-strands of each monomer intercalate to form a hydrophobic core, while the alpha-helices form wings that extend away from the core.

The protein localises to the cytoplasm. A translational regulator that binds mRNA to regulate translation initiation and/or mRNA stability. Usually binds in the 5'-UTR at or near the Shine-Dalgarno sequence preventing ribosome-binding, thus repressing translation. Its main target seems to be the major flagellin gene, while its function is anatagonized by FliW. This Leptospira interrogans serogroup Icterohaemorrhagiae serovar Lai (strain 56601) protein is Translational regulator CsrA.